The chain runs to 876 residues: Probable DNA-directed RNA polymerase catalytic subunit (876 aa).

This sequence belongs to the RNA polymerase beta chain family. As to quaternary structure, interacts with LEF-4, LEF-9, and p47.

The enzyme catalyses RNA(n) + a ribonucleoside 5'-triphosphate = RNA(n+1) + diphosphate. Functionally, component of the viral DNA-dependent RNA polymerase which is composed of four equimolar subunits of LEF-4, LEF-8, LEF-9, and p47. Plays an essential role in late and very late gene expression. The polypeptide is Probable DNA-directed RNA polymerase catalytic subunit (LEF-8) (Autographa californica nuclear polyhedrosis virus (AcMNPV)).